Reading from the N-terminus, the 598-residue chain is Elongation factor 4 (598 aa).

The tr-type G domain maps to 5–187 (ANIRNFSIIA…ALVEFIPAPT (183 aa)). Residues 17-22 (DHGKST) and 134-137 (NKID) each bind GTP.

It belongs to the TRAFAC class translation factor GTPase superfamily. Classic translation factor GTPase family. LepA subfamily.

It localises to the cell inner membrane. It carries out the reaction GTP + H2O = GDP + phosphate + H(+). Required for accurate and efficient protein synthesis under certain stress conditions. May act as a fidelity factor of the translation reaction, by catalyzing a one-codon backward translocation of tRNAs on improperly translocated ribosomes. Back-translocation proceeds from a post-translocation (POST) complex to a pre-translocation (PRE) complex, thus giving elongation factor G a second chance to translocate the tRNAs correctly. Binds to ribosomes in a GTP-dependent manner. The protein is Elongation factor 4 of Psychrobacter arcticus (strain DSM 17307 / VKM B-2377 / 273-4).